The chain runs to 200 residues: Flavin prenyltransferase UbiX (200 aa).

FMN-binding positions include 15–17 (GAS), Thr-41, 102–105 (SMGT), and Arg-137. Residues Tyr-167 and Lys-183 each coordinate dimethylallyl phosphate.

It belongs to the UbiX/PAD1 family.

It carries out the reaction dimethylallyl phosphate + FMNH2 = prenylated FMNH2 + phosphate. In terms of biological role, flavin prenyltransferase that catalyzes the synthesis of the prenylated FMN cofactor (prenyl-FMN) for 4-hydroxy-3-polyprenylbenzoic acid decarboxylase UbiD. The prenyltransferase is metal-independent and links a dimethylallyl moiety from dimethylallyl monophosphate (DMAP) to the flavin N5 and C6 atoms of FMN. This Alkalihalophilus pseudofirmus (strain ATCC BAA-2126 / JCM 17055 / OF4) (Bacillus pseudofirmus) protein is Flavin prenyltransferase UbiX.